Reading from the N-terminus, the 71-residue chain is MSNKMTGLVKWFNADKGFGFISPVDGSKDVFVHFSAIQNDNYRTLFEGQKVTFSIESGAKGPAAANVIITD.

Positions 7 to 67 (GLVKWFNADK…GAKGPAAANV (61 aa)) constitute a CSD domain.

It localises to the cytoplasm. In Escherichia coli (strain K12), this protein is Cold shock-like protein CspB (cspB).